The primary structure comprises 78 residues: Delta-conotoxin TxVIA (78 aa).

The signal sequence occupies residues 1-22; the sequence is MKLTCMMIVAVLFLTAWTFATA. A propeptide spanning residues 23 to 49 is cleaved from the precursor; that stretch reads DDPRNGLGNLFSNAHHEMKNPEASKLN. Cystine bridges form between cysteine 53–cysteine 68, cysteine 60–cysteine 72, and cysteine 67–cysteine 77. Methionine 59 bears the Methionine sulfoxide; partial mark.

Belongs to the conotoxin O1 superfamily. Expressed by the venom duct.

The protein localises to the secreted. In terms of biological role, delta-conotoxins bind to site 6 of voltage-gated sodium channels (Nav) and inhibit the inactivation process. Binding of this toxin is strongly calcium-dependent but not voltage-dependent. The binding site is most likely on the extracellular side of the sodium channel. Binds receptor sites on both mollusk and rat central nervous system, but despite its high affinity binding to rat sodium channel, it has no functional effect in vivo and in vitro on it. Also has no effect on Gambusia fish. Is important in mollusk for the paralysis of the prey. Upon injection of the peptide, a subordinate lobster assumes an exaggerated dominant posture (of a 'King-Kong' lobster!). This Conus textile (Cloth-of-gold cone) protein is Delta-conotoxin TxVIA.